We begin with the raw amino-acid sequence, 507 residues long: Hippocampus abundant transcript-like protein 1 (507 aa).

The tract at residues 1–22 is disordered; sequence MSTDGESPEEPGWKAVASPKAS. Residues 1–51 lie on the Extracellular side of the membrane; sequence MSTDGESPEEPGWKAVASPKASAMPEKRGSAQAASSSWLQGFGQPSVYHAA. A helical transmembrane segment spans residues 52 to 72; sequence FVIFFEFFAWGLLTTPMLTVL. The Cytoplasmic segment spans residues 73 to 84; the sequence is HETFPQHTFLMN. The helical transmembrane segment at 85-105 threads the bilayer; that stretch reads GLIQGVKGLLSFLSAPLIGAL. Over 106 to 113 the chain is Extracellular; it reads SDVWGRKP. Residues 114–134 traverse the membrane as a helical segment; that stretch reads FLLGTVFFTCFPIPLMRISPW. The Cytoplasmic segment spans residues 135 to 136; sequence WY. A helical membrane pass occupies residues 137 to 157; it reads FGMISVSGVFSVTFSVIFAYV. Over 158-170 the chain is Extracellular; it reads ADFTQEHERSTAY. The chain crosses the membrane as a helical span at residues 171–191; the sequence is GWVSATFAASLVSSPAIGTYL. The Cytoplasmic portion of the chain corresponds to 192–198; the sequence is SSNYGDS. Residues 199 to 219 traverse the membrane as a helical segment; that stretch reads LVVLVATVVALLDICFILVAV. The Extracellular portion of the chain corresponds to 220–257; the sequence is PESLPEKIRPASWGAQISWKQADPFASLKKVGKDSTVL. The chain crosses the membrane as a helical span at residues 258–278; sequence LICITVFLSYLPEAGQYSSFF. Over 279 to 283 the chain is Cytoplasmic; that stretch reads LYLRQ. A helical membrane pass occupies residues 284–304; the sequence is VIGFGSVKIVAFIAMVGILSI. Over 305–323 the chain is Extracellular; sequence LAQTVFLSKLMRSLGNKNT. The helical transmembrane segment at 324–344 threads the bilayer; it reads VLLGLGFQILQLAWYGFGAQA. Residues 345–347 lie on the Cytoplasmic side of the membrane; sequence WMM. Residues 348-368 form a helical membrane-spanning segment; that stretch reads WAAGTVAAMSSITFPAVSALI. Topologically, residues 369 to 389 are extracellular; sequence SRNAESDQQGVAQGIITGIRG. A helical transmembrane segment spans residues 390 to 410; that stretch reads LCNGLGPALYGFIFYLFHVEL. The Cytoplasmic segment spans residues 411–430; sequence NELGPKLDSDNDPLQGAFIP. A helical transmembrane segment spans residues 431-451; the sequence is GPPFLFGACIVLMSFLVALFI. At 452 to 507 the chain is on the extracellular side; the sequence is PEYRKTGGVQKHNNSISGSLSTPPERGSDEDIEPLLQDSNIWELSSEEPGNQCTEL. Residues 462-473 show a composition bias toward polar residues; it reads KHNNSISGSLST. The interval 462–483 is disordered; it reads KHNNSISGSLSTPPERGSDEDI. A glycan (N-linked (GlcNAc...) asparagine) is linked at asparagine 464.

Belongs to the major facilitator superfamily.

It is found in the membrane. In Rattus norvegicus (Rat), this protein is Hippocampus abundant transcript-like protein 1.